The sequence spans 428 residues: Light-independent protochlorophyllide reductase subunit N (428 aa).

Residues C29, C54, and C115 each contribute to the [4Fe-4S] cluster site.

The protein belongs to the BchN/ChlN family. As to quaternary structure, protochlorophyllide reductase is composed of three subunits; BchL, BchN and BchB. Forms a heterotetramer of two BchB and two BchN subunits. It depends on [4Fe-4S] cluster as a cofactor.

It carries out the reaction chlorophyllide a + oxidized 2[4Fe-4S]-[ferredoxin] + 2 ADP + 2 phosphate = protochlorophyllide a + reduced 2[4Fe-4S]-[ferredoxin] + 2 ATP + 2 H2O. It functions in the pathway porphyrin-containing compound metabolism; bacteriochlorophyll biosynthesis (light-independent). Its function is as follows. Component of the dark-operative protochlorophyllide reductase (DPOR) that uses Mg-ATP and reduced ferredoxin to reduce ring D of protochlorophyllide (Pchlide) to form chlorophyllide a (Chlide). This reaction is light-independent. The NB-protein (BchN-BchB) is the catalytic component of the complex. The polypeptide is Light-independent protochlorophyllide reductase subunit N (Cereibacter sphaeroides (strain ATCC 17029 / ATH 2.4.9) (Rhodobacter sphaeroides)).